A 784-amino-acid chain; its full sequence is Cell wall protein Lmo0130 (784 aa).

The signal sequence occupies residues 1-34 (MKVNKFFKKTTHVLLVAGLTIGLTAPFTGTTAQA). The tract at residues 690–761 (ATTPPDNGNG…NTSLPTTGDT (72 aa)) is disordered. The segment covering 697 to 729 (GNGGTDNGNGNGNNGGTDGNGGTNNGNGSGTNG) has biased composition (gly residues). The segment covering 730 to 759 (GTTTTEDPTTTTSNTSTTGTSSNTSLPTTG) has biased composition (low complexity). Positions 755–759 (LPTTG) match the LPXTG sorting signal motif. Pentaglycyl murein peptidoglycan amidated threonine is present on threonine 758. The propeptide at 759–784 (GDTAGLATVFGVILTTTALYVLRKRS) is removed by sortase A.

It localises to the secreted. The protein localises to the cell wall. This Listeria monocytogenes serovar 1/2a (strain ATCC BAA-679 / EGD-e) protein is Cell wall protein Lmo0130.